The primary structure comprises 821 residues: Dapper homolog 1 (821 aa).

The stretch at 88-136 (LNTEEKLLEENILLLRKQLNCLRRRDAGLINQLQELDRQISDLRLDTET) forms a coiled coil. Disordered stretches follow at residues 288-312 (SKPG…SSWH), 386-432 (QDAS…STTN), 564-615 (NSAS…KTKR), and 627-655 (ERHT…VLAK). Residues 388–400 (ASATSTEPSTASP) show a composition bias toward low complexity. The segment covering 401-432 (QRQWSAESKGGTPQNGAYLSSSQPQNSYSTTN) has biased composition (polar residues). Basic residues-rich tracts occupy residues 584 to 593 (DKHRTGSRRT), 601 to 615 (HLHK…KTKR), and 639 to 649 (AQRHHGHHRHH). A PDZ-binding motif is present at residues 818-821 (MTTV).

This sequence belongs to the dapper family. Interacts with dvl2.

The protein resides in the cytoplasm. In terms of biological role, involved in regulation of intracellular signaling pathways during development. Specifically thought to play a role in canonical and/or non-canonical Wnt signaling pathways through interaction with DSH (Dishevelled) family proteins. Binds to dvl2 and may regulate the degradation of ctnnb1/beta-catenin, thereby modulating the transcriptional activation of target genes of the Wnt signaling pathway. Seems to activate the canonical Wnt signaling pathway. The protein is Dapper homolog 1 (dact1) of Danio rerio (Zebrafish).